Consider the following 209-residue polypeptide: Octanoyltransferase (209 aa).

One can recognise a BPL/LPL catalytic domain in the interval 28–203 (NATPETLLLL…RFQGLLDEWL (176 aa)). Substrate-binding positions include 66–73 (RGGDVTFH), 133–135 (AIG), and 146–148 (GFA). C164 (acyl-thioester intermediate) is an active-site residue.

Belongs to the LipB family.

It is found in the cytoplasm. It catalyses the reaction octanoyl-[ACP] + L-lysyl-[protein] = N(6)-octanoyl-L-lysyl-[protein] + holo-[ACP] + H(+). Its pathway is protein modification; protein lipoylation via endogenous pathway; protein N(6)-(lipoyl)lysine from octanoyl-[acyl-carrier-protein]: step 1/2. In terms of biological role, catalyzes the transfer of endogenously produced octanoic acid from octanoyl-acyl-carrier-protein onto the lipoyl domains of lipoate-dependent enzymes. Lipoyl-ACP can also act as a substrate although octanoyl-ACP is likely to be the physiological substrate. In Pelobacter propionicus (strain DSM 2379 / NBRC 103807 / OttBd1), this protein is Octanoyltransferase.